The chain runs to 328 residues: MAEQSQLKNLTIILLLLCLSFQSLSFAAESHLTVDFYSKSCPKFLDIIRETITNKQISTPTTAAAALRLFFHDCFPNGCDASVLVSSTAFNTAERDSSINLSLPGDGFDVVIRAKTALELACPNTVSCSDIIAVAVRDLLVTVGGPYYEISLGRRDSRTSKSSLVSDLLPLPSMQISKLIDQFSSRGFSVQEMVALSGAHTIGFSHCKEFTNRVNPNNSTGYNPRFAVALKKACSNSKNDPTISVFNDVMTPNKFDNMYFQNIPKGLGLLESDHGLFSDPRTRPFVELYARDQSRFFNDFAGAMQKLSLHGVLTGRRGEIRRRCDAIN.

The signal sequence occupies residues 1-27 (MAEQSQLKNLTIILLLLCLSFQSLSFA). Disulfide bonds link Cys-41-Cys-122, Cys-74-Cys-79, Cys-128-Cys-324, and Cys-207-Cys-234. His-72 serves as the catalytic Proton acceptor. Ca(2+) is bound by residues Asp-73, Gly-78, Asp-80, and Ser-82. Pro-170 is a binding site for substrate. Heme b is bound at residue His-200. Residue Thr-201 coordinates Ca(2+). Residues Asn-217 and Asn-218 are each glycosylated (N-linked (GlcNAc...) asparagine). The Ca(2+) site is built by Asp-248, Thr-251, and Asp-256.

Belongs to the peroxidase family. Classical plant (class III) peroxidase subfamily. Heme b serves as cofactor. Requires Ca(2+) as cofactor.

It localises to the secreted. It carries out the reaction 2 a phenolic donor + H2O2 = 2 a phenolic radical donor + 2 H2O. Functionally, removal of H(2)O(2), oxidation of toxic reductants, biosynthesis and degradation of lignin, suberization, auxin catabolism, response to environmental stresses such as wounding, pathogen attack and oxidative stress. These functions might be dependent on each isozyme/isoform in each plant tissue. This is Peroxidase 63 (PER63) from Arabidopsis thaliana (Mouse-ear cress).